We begin with the raw amino-acid sequence, 289 residues long: Bis(5'-nucleosyl)-tetraphosphatase, symmetrical (289 aa).

This sequence belongs to the Ap4A hydrolase family.

The catalysed reaction is P(1),P(4)-bis(5'-adenosyl) tetraphosphate + H2O = 2 ADP + 2 H(+). Functionally, hydrolyzes diadenosine 5',5'''-P1,P4-tetraphosphate to yield ADP. This is Bis(5'-nucleosyl)-tetraphosphatase, symmetrical from Yersinia pseudotuberculosis serotype O:1b (strain IP 31758).